The sequence spans 187 residues: Elongation factor P (187 aa).

This sequence belongs to the elongation factor P family.

The protein resides in the cytoplasm. It functions in the pathway protein biosynthesis; polypeptide chain elongation. Its function is as follows. Involved in peptide bond synthesis. Stimulates efficient translation and peptide-bond synthesis on native or reconstituted 70S ribosomes in vitro. Probably functions indirectly by altering the affinity of the ribosome for aminoacyl-tRNA, thus increasing their reactivity as acceptors for peptidyl transferase. The polypeptide is Elongation factor P (Desulfatibacillum aliphaticivorans).